The following is a 159-amino-acid chain: Cell number regulator 4 (159 aa).

The chain crosses the membrane as a helical span at residues 52-74 (LAGLLYCLLLHAGVAVVPCHCIY).

Belongs to the cornifelin family. In terms of tissue distribution, expressed in roots, coleoptiles, leaves, stalks, apical meristems, immature ears, endosperm, pericarp and tassel spikelets.

The protein localises to the membrane. The sequence is that of Cell number regulator 4 (CNR4) from Zea mays (Maize).